The chain runs to 447 residues: UPF0210 protein Ldb1026 (447 aa).

The protein belongs to the UPF0210 family. Homodimer.

This chain is UPF0210 protein Ldb1026, found in Lactobacillus delbrueckii subsp. bulgaricus (strain ATCC 11842 / DSM 20081 / BCRC 10696 / JCM 1002 / NBRC 13953 / NCIMB 11778 / NCTC 12712 / WDCM 00102 / Lb 14).